The following is a 503-amino-acid chain: ATP synthase subunit beta (503 aa).

Residue 157–164 participates in ATP binding; sequence GGAGVGKT.

It belongs to the ATPase alpha/beta chains family. As to quaternary structure, F-type ATPases have 2 components, CF(1) - the catalytic core - and CF(0) - the membrane proton channel. CF(1) has five subunits: alpha(3), beta(3), gamma(1), delta(1), epsilon(1). CF(0) has three main subunits: a(1), b(2) and c(9-12). The alpha and beta chains form an alternating ring which encloses part of the gamma chain. CF(1) is attached to CF(0) by a central stalk formed by the gamma and epsilon chains, while a peripheral stalk is formed by the delta and b chains.

It is found in the cell inner membrane. It catalyses the reaction ATP + H2O + 4 H(+)(in) = ADP + phosphate + 5 H(+)(out). Functionally, produces ATP from ADP in the presence of a proton gradient across the membrane. The catalytic sites are hosted primarily by the beta subunits. The chain is ATP synthase subunit beta from Flavobacterium johnsoniae (strain ATCC 17061 / DSM 2064 / JCM 8514 / BCRC 14874 / CCUG 350202 / NBRC 14942 / NCIMB 11054 / UW101) (Cytophaga johnsonae).